The following is a 777-amino-acid chain: MNTKILETLEFNKIKDLFQGSLQTEQGKLELQVLQPTTKKEAIERAFLEVTDMEQILVEDPHFHLAATKDITAISKRLELDGDLNIEELLVLKKVLRVSHDLVTFYNDLENVRLQELNRIFENLVDFPAIQGSLLAVNDGGFIESFASEELGRIRRKIQENESKVRDLLQEILKNKGDMLADQVVASRNGRNVLPVKNTYRNRIPGVVHDISASGTTIYIEPRAVVNLNEEISNYKADERYELLRILQELSAMIRPHAAEIANNAWIIGHLDLVMAKLAFMRERGAVVPAISDTQAIQLLQVRHPLIQNAVANDLHFGPDLTEIVITGPNTGGKTIMLKTLGLAQIMAQSGLPILADKGSRVGIFSQIFADIGDEQSIEQSLSTFSSHMTNIVSILEQVDSESLVLLDELGAGTDPQEGAALAIAILEDLRLRQIKTMATTHYPELKAYGIETDWVENASMEFDTDSLRPTYRFMQGVPGRSNAFEIARRLGLSEVIVSHAQEQTNTDSDVNQIIERLEEQTLESRKRLDNIREVEQENLKFNRALKKLYNEFNREKETELNKARLEAQEIVDLALSESESILKNLHAKSSLKPHEIIEAKAQLKKLAPETVDLSKNKVLKQAKKNRAPKVGDDILVTSYGQRGTLVKLLKDGRWEAQVGLIKMTLEEQEFNLLKAEKEQQPKRKQVNVVKRANTAGPRARLDLRGKRYEEAMKELDEFIDQALLNNMAQVDIIHGIGTGVIREGVNKYLRRNKHVKSFGYAPQNAGGSGATIVIFK.

328–335 is an ATP binding site; the sequence is GPNTGGKT. Residues 702–777 enclose the Smr domain; the sequence is LDLRGKRYEE…GSGATIVIFK (76 aa).

This sequence belongs to the DNA mismatch repair MutS family. MutS2 subfamily. As to quaternary structure, homodimer. Binds to stalled ribosomes, contacting rRNA.

Endonuclease that is involved in the suppression of homologous recombination and thus may have a key role in the control of bacterial genetic diversity. Its function is as follows. Acts as a ribosome collision sensor, splitting the ribosome into its 2 subunits. Detects stalled/collided 70S ribosomes which it binds and splits by an ATP-hydrolysis driven conformational change. Acts upstream of the ribosome quality control system (RQC), a ribosome-associated complex that mediates the extraction of incompletely synthesized nascent chains from stalled ribosomes and their subsequent degradation. Probably generates substrates for RQC. The protein is Endonuclease MutS2 of Streptococcus gordonii (strain Challis / ATCC 35105 / BCRC 15272 / CH1 / DL1 / V288).